A 437-amino-acid polypeptide reads, in one-letter code: CCA-adding enzyme (437 aa).

Residues serine 50 and lysine 53 each contribute to the ATP site. CTP contacts are provided by serine 50 and lysine 53. Mg(2+)-binding residues include aspartate 61, aspartate 63, and aspartate 112. 3 residues coordinate ATP: histidine 135, lysine 155, and tyrosine 164. Positions 135, 155, and 164 each coordinate CTP.

This sequence belongs to the tRNA nucleotidyltransferase/poly(A) polymerase family. Archaeal CCA-adding enzyme subfamily. In terms of assembly, homodimer. Mg(2+) serves as cofactor.

It catalyses the reaction a tRNA precursor + 2 CTP + ATP = a tRNA with a 3' CCA end + 3 diphosphate. It carries out the reaction a tRNA with a 3' CCA end + 2 CTP + ATP = a tRNA with a 3' CCACCA end + 3 diphosphate. Catalyzes the addition and repair of the essential 3'-terminal CCA sequence in tRNAs without using a nucleic acid template. Adds these three nucleotides in the order of C, C, and A to the tRNA nucleotide-73, using CTP and ATP as substrates and producing inorganic pyrophosphate. tRNA 3'-terminal CCA addition is required both for tRNA processing and repair. Also involved in tRNA surveillance by mediating tandem CCA addition to generate a CCACCA at the 3' terminus of unstable tRNAs. While stable tRNAs receive only 3'-terminal CCA, unstable tRNAs are marked with CCACCA and rapidly degraded. The polypeptide is CCA-adding enzyme (Thermoplasma volcanium (strain ATCC 51530 / DSM 4299 / JCM 9571 / NBRC 15438 / GSS1)).